Reading from the N-terminus, the 109-residue chain is Staphostatin B (109 aa).

Positions 97–101 (IGTSR) are binds to staphopain B.

This sequence belongs to the protease inhibitor I57 (SspC) family. Forms a stable non-covalent complex with prematurely activated/folded SspB.

The protein resides in the cytoplasm. Its function is as follows. Specifically inhibits the cysteine protease staphopain B (SspB) by blocking the active site of the enzyme. Probably required to protect cytoplasmic proteins from being degraded by prematurely activated/folded prostaphopain B. Also involved in growth capacity, viability and bacterial morphology. The chain is Staphostatin B (sspC) from Staphylococcus aureus (strain Mu50 / ATCC 700699).